A 451-amino-acid chain; its full sequence is PTS system galactose-specific EIIC component (451 aa).

A PTS EIIC type-3 domain is found at 8 to 427 (LNKTLMPLAS…VLNVLIYYPF (420 aa)). Transmembrane regions (helical) follow at residues 40 to 60 (LGIA…VDFL), 69 to 89 (FSAV…YNFA), 104 to 124 (GLLS…VPVV), 151 to 171 (TGST…LVYI), 190 to 210 (VVDS…MFGI), 239 to 259 (ANPW…FFGI), 263 to 283 (LIGG…IDAY), 296 to 316 (IVFA…GLVI), 332 to 352 (LGAI…LPMM), 356 to 376 (LFFI…LGLA), and 403 to 423 (ISGG…NVLI).

It localises to the cell membrane. The phosphoenolpyruvate-dependent sugar phosphotransferase system (PTS), a major carbohydrate active transport system, catalyzes the phosphorylation of incoming sugar substrates concomitant with their translocation across the cell membrane. Involved in galactose transport with PtcA and PtcB. The polypeptide is PTS system galactose-specific EIIC component (Lactococcus lactis subsp. cremoris (strain MG1363)).